The following is a 189-amino-acid chain: UPF0301 protein A1C_00165 (189 aa).

It belongs to the UPF0301 (AlgH) family.

The polypeptide is UPF0301 protein A1C_00165 (Rickettsia akari (strain Hartford)).